A 65-amino-acid chain; its full sequence is Weak neurotoxin 7 (65 aa).

5 disulfide bridges follow: Cys3-Cys24, Cys6-Cys11, Cys17-Cys42, Cys46-Cys57, and Cys58-Cys63.

It belongs to the three-finger toxin family. Ancestral subfamily. Orphan group II sub-subfamily. As to expression, expressed by the venom gland.

It is found in the secreted. Functionally, binds with low affinity to muscular (alpha-1-beta-1-delta-epsilon/CHRNA1-CHRNB1-CHRND-CHRNE) and very low affinity to neuronal (alpha-7/CHRNA7) nicotinic acetylcholine receptor (nAChR). In Naja naja (Indian cobra), this protein is Weak neurotoxin 7.